The chain runs to 224 residues: Serum amyloid P-component (224 aa).

An N-terminal signal peptide occupies residues 1–19 (MERLLLWVSVLASLPEAFA). The Pentraxin (PTX) domain maps to 24 to 224 (TGKVFVFPRE…YVVIKPRVWS (201 aa)). N-linked (GlcNAc...) asparagine glycosylation occurs at Asn-51. Cys-55 and Cys-114 are joined by a disulfide. Ca(2+) is bound by residues Asp-77, Asn-78, Glu-155, Gln-156, Asp-157, and Gln-167.

The protein belongs to the pentraxin family. Homopentamer. Pentraxin (or pentaxin) have a discoid arrangement of 5 non-covalently bound subunits. Ca(2+) serves as cofactor.

It is found in the secreted. The polypeptide is Serum amyloid P-component (APCS) (Sus scrofa (Pig)).